The primary structure comprises 260 residues: uncharacterized protein (260 aa).

The ABC transporter domain occupies 4-231 (LHVDHVTHTY…PKELAAMLPF (228 aa)). Residue 40 to 47 (GPSGCGKT) participates in ATP binding.

The protein belongs to the ABC transporter superfamily.

This is an uncharacterized protein from Bacillus subtilis (strain 168).